The following is a 160-amino-acid chain: 2-C-methyl-D-erythritol 2,4-cyclodiphosphate synthase (160 aa).

2 residues coordinate a divalent metal cation: aspartate 11 and histidine 13. 4-CDP-2-C-methyl-D-erythritol 2-phosphate is bound by residues aspartate 11 to histidine 13 and histidine 37 to serine 38. Position 45 (histidine 45) interacts with a divalent metal cation. Residues aspartate 59 to glycine 61, phenylalanine 64 to aspartate 68, alanine 103 to alanine 109, threonine 135 to glutamate 138, phenylalanine 142, and arginine 145 contribute to the 4-CDP-2-C-methyl-D-erythritol 2-phosphate site.

Belongs to the IspF family. Homotrimer. A divalent metal cation serves as cofactor.

The catalysed reaction is 4-CDP-2-C-methyl-D-erythritol 2-phosphate = 2-C-methyl-D-erythritol 2,4-cyclic diphosphate + CMP. Its pathway is isoprenoid biosynthesis; isopentenyl diphosphate biosynthesis via DXP pathway; isopentenyl diphosphate from 1-deoxy-D-xylulose 5-phosphate: step 4/6. Involved in the biosynthesis of isopentenyl diphosphate (IPP) and dimethylallyl diphosphate (DMAPP), two major building blocks of isoprenoid compounds. Catalyzes the conversion of 4-diphosphocytidyl-2-C-methyl-D-erythritol 2-phosphate (CDP-ME2P) to 2-C-methyl-D-erythritol 2,4-cyclodiphosphate (ME-CPP) with a corresponding release of cytidine 5-monophosphate (CMP). This chain is 2-C-methyl-D-erythritol 2,4-cyclodiphosphate synthase, found in Thioalkalivibrio sulfidiphilus (strain HL-EbGR7).